Here is a 321-residue protein sequence, read N- to C-terminus: MSQSLRIVFAGTPDFAARHLAALLSSEHEVIAVYTQPDRPAGRGKKLTASPVKNIALENNIPVYQPENFKSDEAKQELANLNADIMVVVAYGLLLPQAVLDTPRLGCINVHGSILPRWRGAAPIQRSIWAGDKETGVTIMQMDIGLDTGDMLSIATLPIESTDTSASMYEKLAGLGPDALVECLADIASGKAVAEKQDDELANYAKKLSKEEAKIDWNDSAEHIERCVRAFNPWPMSHFAIVDSSSNDEKSIKVWQTRVDEESTSAPAGSIIKADKTGIYVATGDKVLVLEQLQVPGKKAMSVQDILNSRASWFEVGTQLS.

Position 113 to 116 (113 to 116) interacts with (6S)-5,6,7,8-tetrahydrofolate; the sequence is SILP.

The protein belongs to the Fmt family.

It catalyses the reaction L-methionyl-tRNA(fMet) + (6R)-10-formyltetrahydrofolate = N-formyl-L-methionyl-tRNA(fMet) + (6S)-5,6,7,8-tetrahydrofolate + H(+). Functionally, attaches a formyl group to the free amino group of methionyl-tRNA(fMet). The formyl group appears to play a dual role in the initiator identity of N-formylmethionyl-tRNA by promoting its recognition by IF2 and preventing the misappropriation of this tRNA by the elongation apparatus. The protein is Methionyl-tRNA formyltransferase of Vibrio atlanticus (strain LGP32) (Vibrio splendidus (strain Mel32)).